Reading from the N-terminus, the 159-residue chain is Immunoglobulin J chain (159 aa).

The first 22 residues, 1-22 (MKNHLLFWGVLAVFIKAVHVKA), serve as a signal peptide directing secretion. Residue Gln-23 is modified to Pyrrolidone carboxylic acid. 3 cysteine pairs are disulfide-bonded: Cys-35–Cys-123, Cys-94–Cys-114, and Cys-131–Cys-156. Residue Asn-71 is glycosylated (N-linked (GlcNAc...) (complex) asparagine).

Part of the secretory IgA (sIgA) complex that consists of two, four or five IgA monomers, and two additional non-Ig polypeptides, namely the JCHAIN and the secretory component (the proteolytic product of PIGR). Part of the secretory IgM (sIgM) complex that consists of five IgM monomers, and two additional non-Ig polypeptides, namely the JCHAIN and the secretory component (the proteolytic product of PIGR). JCHAIN-containing IgM interacts (via CH4 domain) with FCRM (via Ig-like domain).

The protein resides in the secreted. Serves to link two monomer units of either IgM or IgA. In the case of IgM, the J chain-joined dimer is a nucleating unit for the IgM pentamer, and in the case of IgA it induces dimers and/or larger polymers. It also helps to bind these immunoglobulins to secretory component. In Homo sapiens (Human), this protein is Immunoglobulin J chain.